The sequence spans 568 residues: Kelch-like protein 12 (568 aa).

The BTB domain maps to 33-100 (CDVTLRVEQK…VYTETVHVTV (68 aa)). In terms of domain architecture, BACK spans 135-236 (CLGIRDFAET…LTPRYITDVI (102 aa)). Kelch repeat units follow at residues 282 to 329 (VLLV…SLHD), 331 to 379 (IYVI…TLGD), 380 to 426 (MIYV…VASG), 427 to 473 (IIYC…LLND), 475 to 520 (IYVV…VLRG), and 522 to 567 (LYAI…VLRE). The tract at residues 405–568 (QWSMLGDMQT…DAGVCVLREK (164 aa)) is interaction with DVL3.

In terms of assembly, component of the BCR(KLHL12) E3 ubiquitin ligase complex, at least composed of CUL3 and KLHL12 and RBX1. This complex interacts with DVL3 upon activation of the Wnt signaling pathway by WNT3A. Interacts with DRD4, KLHL2 and SEC31A. Interacts with PEF1 and PDCD6/ALG-2; interaction takes place in response to cytosolic calcium increase and leads to bridge together the BCR(KLHL12) complex and SEC31 (SEC31A or SEC31B). Ubiquitinated by the SCF(FBXL17) complex, leading to its degradation by the proteasome: ubiquitination by the SCF(FBXL17) complex takes place when aberrant BTB domain dimers are formed.

Its subcellular location is the cytoplasmic vesicle. The protein localises to the COPII-coated vesicle. It participates in protein modification; protein ubiquitination. Its function is as follows. Substrate-specific adapter of a BCR (BTB-CUL3-RBX1) E3 ubiquitin ligase complex that acts as a negative regulator of Wnt signaling pathway and ER-Golgi transport. The BCR(KLHL12) complex is involved in ER-Golgi transport by regulating the size of COPII coats, thereby playing a key role in collagen export, which is required for embryonic stem (ES) cells division: BCR(KLHL12) acts by mediating monoubiquitination of SEC31 (SEC31A or SEC31B). The BCR(KLHL12) complex is also involved in neural crest specification: in response to cytosolic calcium increase, interacts with the heterodimer formed with PEF1 and PDCD6/ALG-2, leading to bridge together the BCR(KLHL12) complex and SEC31 (SEC31A or SEC31B), promoting monoubiquitination of SEC31 and subsequent collagen export. As part of the BCR(KLHL12) complex, also acts as a negative regulator of the Wnt signaling pathway by mediating ubiquitination and subsequent proteolysis of DVL3. The BCR(KLHL12) complex also mediates polyubiquitination of DRD4 and PEF1, without leading to degradation of these proteins. In Rattus norvegicus (Rat), this protein is Kelch-like protein 12 (Klhl12).